The chain runs to 299 residues: UDP-3-O-acyl-N-acetylglucosamine deacetylase (299 aa).

Zn(2+)-binding residues include histidine 75, histidine 232, and aspartate 236. Histidine 259 functions as the Proton donor in the catalytic mechanism.

It belongs to the LpxC family. Zn(2+) is required as a cofactor.

It carries out the reaction a UDP-3-O-[(3R)-3-hydroxyacyl]-N-acetyl-alpha-D-glucosamine + H2O = a UDP-3-O-[(3R)-3-hydroxyacyl]-alpha-D-glucosamine + acetate. It participates in glycolipid biosynthesis; lipid IV(A) biosynthesis; lipid IV(A) from (3R)-3-hydroxytetradecanoyl-[acyl-carrier-protein] and UDP-N-acetyl-alpha-D-glucosamine: step 2/6. In terms of biological role, catalyzes the hydrolysis of UDP-3-O-myristoyl-N-acetylglucosamine to form UDP-3-O-myristoylglucosamine and acetate, the committed step in lipid A biosynthesis. The chain is UDP-3-O-acyl-N-acetylglucosamine deacetylase from Helicobacter hepaticus (strain ATCC 51449 / 3B1).